The chain runs to 276 residues: Elongation factor Ts, mitochondrial (276 aa).

The protein belongs to the EF-Ts family.

The protein resides in the mitochondrion. Its function is as follows. Associates with the EF-Tu.GDP complex and induces the exchange of GDP to GTP. It remains bound to the aminoacyl-tRNA.EF-Tu.GTP complex up to the GTP hydrolysis stage on the ribosome. This chain is Elongation factor Ts, mitochondrial, found in Leishmania infantum.